The following is a 411-amino-acid chain: Probable phosphatase HAD1 (411 aa).

The span at Leu14 to Pro23 shows a compositional bias: polar residues. A disordered region spans residues Leu14–Phe33. The active-site Nucleophile is Asp61. Positions 61, 63, and 338 each coordinate Mg(2+). Asp63 acts as the Proton donor in catalysis. Residues Pro296–Asp386 are disordered. Positions Val326–Val345 are enriched in polar residues. The span at Ser362–Arg373 shows a compositional bias: basic and acidic residues.

Belongs to the HAD-like hydrolase superfamily. Phosphorylated.

In terms of biological role, probable phosphatase. Required for cell wall integrity and virulence. This Cryptococcus neoformans var. grubii serotype A (strain H99 / ATCC 208821 / CBS 10515 / FGSC 9487) (Filobasidiella neoformans var. grubii) protein is Probable phosphatase HAD1.